Here is a 275-residue protein sequence, read N- to C-terminus: Phospholipid scramblase (275 aa).

The helical transmembrane segment at 256 to 272 threads the bilayer; that stretch reads WKMMLLAFALFLDYMYY.

It belongs to the phospholipid scramblase family. In terms of assembly, forms homooligomers in the presence of calcium. The cofactor is Ca(2+). Mg(2+) serves as cofactor.

Its subcellular location is the membrane. The protein resides in the cell membrane. It carries out the reaction a 1,2-diacyl-sn-glycero-3-phosphoethanolamine(in) = a 1,2-diacyl-sn-glycero-3-phosphoethanolamine(out). Its function is as follows. Catalyzes calcium-induced ATP-independent rapid bidirectional and non-specific movement of phospholipids (lipid scrambling or lipid flip-flop) between the inner and outer leaflet of the plasma membrane resulting in collapse of the phospholipid asymmetry. Preferentially, mediates calcium-dependent phosphatidylethanolamine externalization. During the liver stage, plays a role in the interaction with, and thus invasion of, host hepatocytes. Dispensable for host erythrocyte invasion and asexual parasite development. The polypeptide is Phospholipid scramblase (Plasmodium falciparum (isolate 3D7)).